A 363-amino-acid chain; its full sequence is Ribosome-binding ATPase YchF (363 aa).

The OBG-type G domain occupies 3–256 (FKCGIVGLPN…LDDEERDEFM (254 aa)). 12-17 (NVGKST) is an ATP binding site. Mg(2+)-binding residues include Ser16 and Thr36. Residues 278–361 (NLQTYFTAGV…KDGDVMNFLF (84 aa)) enclose the TGS domain.

This sequence belongs to the TRAFAC class OBG-HflX-like GTPase superfamily. OBG GTPase family. YchF/OLA1 subfamily. Mg(2+) serves as cofactor.

In terms of biological role, ATPase that binds to both the 70S ribosome and the 50S ribosomal subunit in a nucleotide-independent manner. The chain is Ribosome-binding ATPase YchF from Escherichia coli O157:H7.